A 55-amino-acid polypeptide reads, in one-letter code: Large ribosomal subunit protein bL32 (55 aa).

Basic residues predominate over residues M1 to K23. The disordered stretch occupies residues M1 to I26.

Belongs to the bacterial ribosomal protein bL32 family.

This chain is Large ribosomal subunit protein bL32, found in Picosynechococcus sp. (strain ATCC 27264 / PCC 7002 / PR-6) (Agmenellum quadruplicatum).